The following is a 204-amino-acid chain: Holliday junction branch migration complex subunit RuvA (204 aa).

A domain I region spans residues 1-64 (MIGRLRGTLI…EDAQLLYGFN (64 aa)). Residues 65 to 143 (TVSERALFRE…GWGAGDLFTP (79 aa)) form a domain II region. The flexible linker stretch occupies residues 144 to 155 (ATDAAPVDSTPV). The domain III stretch occupies residues 156 to 204 (IAQNAQEEAMSALLALGYKPPQASKAVSQVAKAGMSSEELIREALKSMV).

It belongs to the RuvA family. In terms of assembly, homotetramer. Forms an RuvA(8)-RuvB(12)-Holliday junction (HJ) complex. HJ DNA is sandwiched between 2 RuvA tetramers; dsDNA enters through RuvA and exits via RuvB. An RuvB hexamer assembles on each DNA strand where it exits the tetramer. Each RuvB hexamer is contacted by two RuvA subunits (via domain III) on 2 adjacent RuvB subunits; this complex drives branch migration. In the full resolvosome a probable DNA-RuvA(4)-RuvB(12)-RuvC(2) complex forms which resolves the HJ.

The protein localises to the cytoplasm. In terms of biological role, the RuvA-RuvB-RuvC complex processes Holliday junction (HJ) DNA during genetic recombination and DNA repair, while the RuvA-RuvB complex plays an important role in the rescue of blocked DNA replication forks via replication fork reversal (RFR). RuvA specifically binds to HJ cruciform DNA, conferring on it an open structure. The RuvB hexamer acts as an ATP-dependent pump, pulling dsDNA into and through the RuvAB complex. HJ branch migration allows RuvC to scan DNA until it finds its consensus sequence, where it cleaves and resolves the cruciform DNA. In Vibrio cholerae serotype O1 (strain ATCC 39541 / Classical Ogawa 395 / O395), this protein is Holliday junction branch migration complex subunit RuvA.